We begin with the raw amino-acid sequence, 262 residues long: tRNA pseudouridine synthase A (262 aa).

Asp-51 acts as the Nucleophile in catalysis. Tyr-109 is a substrate binding site.

It belongs to the tRNA pseudouridine synthase TruA family. In terms of assembly, homodimer.

The catalysed reaction is uridine(38/39/40) in tRNA = pseudouridine(38/39/40) in tRNA. Its function is as follows. Formation of pseudouridine at positions 38, 39 and 40 in the anticodon stem and loop of transfer RNAs. This is tRNA pseudouridine synthase A from Actinobacillus pleuropneumoniae serotype 5b (strain L20).